Here is a 67-residue protein sequence, read N- to C-terminus: Putative sodium channel alpha-toxin Acra5 (67 aa).

One can recognise an LCN-type CS-alpha/beta domain in the interval 2–65; the sequence is RDGYIMIKDT…VYGDRGVICR (64 aa). Disulfide bonds link Cys-13/Cys-64, Cys-17/Cys-40, Cys-26/Cys-45, and Cys-30/Cys-47. Position 67 (Arg-67) is a propeptide, removed by a carboxypeptidase.

This sequence belongs to the long (4 C-C) scorpion toxin superfamily. Sodium channel inhibitor family. Alpha subfamily. Expressed by the venom gland.

The protein localises to the secreted. Its function is as follows. Alpha toxins bind voltage-independently at site-3 of sodium channels (Nav) and inhibit the inactivation of the activated channels, thereby blocking neuronal transmission. The polypeptide is Putative sodium channel alpha-toxin Acra5 (Androctonus crassicauda (Arabian fat-tailed scorpion)).